Here is a 73-residue protein sequence, read N- to C-terminus: Large ribosomal subunit protein uL30 (73 aa).

The protein belongs to the universal ribosomal protein uL30 family. Part of the 50S ribosomal subunit.

The polypeptide is Large ribosomal subunit protein uL30 (Borreliella afzelii (strain PKo) (Borrelia afzelii)).